Reading from the N-terminus, the 161-residue chain is Putative pre-16S rRNA nuclease (161 aa).

The interval 141-161 is disordered; it reads AAGSPPGALVPRNRVDPDRHA.

This sequence belongs to the YqgF nuclease family.

Its subcellular location is the cytoplasm. Could be a nuclease involved in processing of the 5'-end of pre-16S rRNA. The sequence is that of Putative pre-16S rRNA nuclease from Clavibacter michiganensis subsp. michiganensis (strain NCPPB 382).